We begin with the raw amino-acid sequence, 252 residues long: 2-succinyl-6-hydroxy-2,4-cyclohexadiene-1-carboxylate synthase (252 aa).

It belongs to the AB hydrolase superfamily. MenH family. In terms of assembly, monomer.

It catalyses the reaction 5-enolpyruvoyl-6-hydroxy-2-succinyl-cyclohex-3-ene-1-carboxylate = (1R,6R)-6-hydroxy-2-succinyl-cyclohexa-2,4-diene-1-carboxylate + pyruvate. The protein operates within quinol/quinone metabolism; 1,4-dihydroxy-2-naphthoate biosynthesis; 1,4-dihydroxy-2-naphthoate from chorismate: step 3/7. It participates in quinol/quinone metabolism; menaquinone biosynthesis. Its function is as follows. Catalyzes a proton abstraction reaction that results in 2,5-elimination of pyruvate from 2-succinyl-5-enolpyruvyl-6-hydroxy-3-cyclohexene-1-carboxylate (SEPHCHC) and the formation of 2-succinyl-6-hydroxy-2,4-cyclohexadiene-1-carboxylate (SHCHC). The protein is 2-succinyl-6-hydroxy-2,4-cyclohexadiene-1-carboxylate synthase of Salmonella schwarzengrund (strain CVM19633).